Reading from the N-terminus, the 351-residue chain is Histidinol-phosphate aminotransferase (351 aa).

K213 is modified (N6-(pyridoxal phosphate)lysine).

This sequence belongs to the class-II pyridoxal-phosphate-dependent aminotransferase family. Histidinol-phosphate aminotransferase subfamily. As to quaternary structure, homodimer. Pyridoxal 5'-phosphate serves as cofactor.

The catalysed reaction is L-histidinol phosphate + 2-oxoglutarate = 3-(imidazol-4-yl)-2-oxopropyl phosphate + L-glutamate. It participates in amino-acid biosynthesis; L-histidine biosynthesis; L-histidine from 5-phospho-alpha-D-ribose 1-diphosphate: step 7/9. This chain is Histidinol-phosphate aminotransferase, found in Thermoanaerobacter sp. (strain X514).